Here is a 114-residue protein sequence, read N- to C-terminus: T cell receptor beta variable 27 (114 aa).

A signal peptide spans 1-21 (MGPQLLGYVVLCLLGAGPLEA). Residues 22–114 (QVTQNPRYLI…TSLYFCASSL (93 aa)) enclose the Ig-like domain. Residues Cys-42 and Cys-110 are joined by a disulfide bond. N-linked (GlcNAc...) asparagine glycosylation is present at Asn-103.

As to quaternary structure, alpha-beta TR is a heterodimer composed of an alpha and beta chain; disulfide-linked. The alpha-beta TR is associated with the transmembrane signaling CD3 coreceptor proteins to form the TR-CD3 (TcR or TCR). The assembly of alpha-beta TR heterodimers with CD3 occurs in the endoplasmic reticulum where a single alpha-beta TR heterodimer associates with one CD3D-CD3E heterodimer, one CD3G-CD3E heterodimer and one CD247 homodimer forming a stable octameric structure. CD3D-CD3E and CD3G-CD3E heterodimers preferentially associate with TR alpha and TR beta chains, respectively. The association of the CD247 homodimer is the last step of TcR assembly in the endoplasmic reticulum and is required for transport to the cell surface.

Its subcellular location is the cell membrane. In terms of biological role, v region of the variable domain of T cell receptor (TR) beta chain that participates in the antigen recognition. Alpha-beta T cell receptors are antigen specific receptors which are essential to the immune response and are present on the cell surface of T lymphocytes. Recognize peptide-major histocompatibility (MH) (pMH) complexes that are displayed by antigen presenting cells (APC), a prerequisite for efficient T cell adaptive immunity against pathogens. Binding of alpha-beta TR to pMH complex initiates TR-CD3 clustering on the cell surface and intracellular activation of LCK that phosphorylates the ITAM motifs of CD3G, CD3D, CD3E and CD247 enabling the recruitment of ZAP70. In turn ZAP70 phosphorylates LAT, which recruits numerous signaling molecules to form the LAT signalosome. The LAT signalosome propagates signal branching to three major signaling pathways, the calcium, the mitogen-activated protein kinase (MAPK) kinase and the nuclear factor NF-kappa-B (NF-kB) pathways, leading to the mobilization of transcription factors that are critical for gene expression and essential for T cell growth and differentiation. The T cell repertoire is generated in the thymus, by V-(D)-J rearrangement. This repertoire is then shaped by intrathymic selection events to generate a peripheral T cell pool of self-MH restricted, non-autoaggressive T cells. Post-thymic interaction of alpha-beta TR with the pMH complexes shapes TR structural and functional avidity. This chain is T cell receptor beta variable 27, found in Homo sapiens (Human).